The primary structure comprises 170 residues: Envelope protein 166 (170 aa).

Met1 is a topological domain (intravirion). The chain crosses the membrane as a helical span at residues 2–22 (FYPVVQVLIGIILVIILILGF). At 23-170 (YHMKHKPPKK…TVMGIARNVL (148 aa)) the chain is on the virion surface side.

Belongs to the asfivirus envelope protein p22 family.

The protein localises to the virion membrane. It localises to the host cell membrane. This chain is Envelope protein 166, found in Ornithodoros (relapsing fever ticks).